We begin with the raw amino-acid sequence, 383 residues long: uncharacterized protein (383 aa).

This sequence belongs to the peptidase M20 family.

This is an uncharacterized protein from Staphylococcus aureus (strain N315).